Reading from the N-terminus, the 175-residue chain is B9 domain-containing protein 2 (175 aa).

Positions A2–S118 constitute a C2 B9-type domain.

The protein belongs to the B9D family. In terms of assembly, part of the tectonic-like complex (also named B9 complex). Interacts with TUBG1.

Its subcellular location is the cytoplasm. It is found in the cytoskeleton. The protein localises to the cilium basal body. The protein resides in the cilium axoneme. It localises to the nucleus. Component of the tectonic-like complex, a complex localized at the transition zone of primary cilia and acting as a barrier that prevents diffusion of transmembrane proteins between the cilia and plasma membranes. The protein is B9 domain-containing protein 2 (B9D2) of Bos taurus (Bovine).